Consider the following 373-residue polypeptide: Histidinol-phosphate aminotransferase (373 aa).

K230 is subject to N6-(pyridoxal phosphate)lysine.

It belongs to the class-II pyridoxal-phosphate-dependent aminotransferase family. Histidinol-phosphate aminotransferase subfamily. As to quaternary structure, homodimer. Pyridoxal 5'-phosphate serves as cofactor.

It catalyses the reaction L-histidinol phosphate + 2-oxoglutarate = 3-(imidazol-4-yl)-2-oxopropyl phosphate + L-glutamate. Its pathway is amino-acid biosynthesis; L-histidine biosynthesis; L-histidine from 5-phospho-alpha-D-ribose 1-diphosphate: step 7/9. The polypeptide is Histidinol-phosphate aminotransferase (Synechococcus sp. (strain ATCC 27144 / PCC 6301 / SAUG 1402/1) (Anacystis nidulans)).